Consider the following 57-residue polypeptide: MKPAVDEMFPEGAGPYVDLDEAGGSTGLLMDLAANEKAVHADFFNDFEDLFDDDDVQ.

Thr26 carries the phosphothreonine modification.

This sequence belongs to the CSN9 family. Component of the CSN complex, composed of COPS1/GPS1, COPS2, COPS3, COPS4, COPS5, COPS6, COPS7 (COPS7A or COPS7B), COPS8 and COPS9. In the complex, it interacts directly with COPS3, COPS5 and COPS6.

The protein resides in the nucleus. It localises to the cytoplasm. The protein localises to the nucleoplasm. Its function is as follows. Component of the COP9 signalosome complex (CSN), a complex involved in various cellular and developmental processes. The CSN complex is an essential regulator of the ubiquitin (Ubl) conjugation pathway by mediating the deneddylation of the cullin subunits of SCF-type E3 ligase complexes, leading to decrease the Ubl ligase activity of SCF-type complexes such as SCF, CSA or DDB2. The complex is also involved in phosphorylation of p53/TP53, c-jun/JUN, IkappaBalpha/NFKBIA, ITPK1 and IRF8/ICSBP, possibly via its association with CK2 and PKD kinases. CSN-dependent phosphorylation of TP53 and JUN promotes and protects degradation by the Ubl system, respectively. Plays a role in cell proliferation. The sequence is that of COP9 signalosome complex subunit 9 from Mus musculus (Mouse).